We begin with the raw amino-acid sequence, 147 residues long: Ribonuclease H (147 aa).

The 137-residue stretch at 5-141 (ARKQITLYSD…CDELARNEAE (137 aa)) folds into the RNase H type-1 domain. Mg(2+) contacts are provided by Asp14, Glu52, Asp74, and Asp133.

This sequence belongs to the RNase H family. Monomer. The cofactor is Mg(2+).

The protein localises to the cytoplasm. It carries out the reaction Endonucleolytic cleavage to 5'-phosphomonoester.. Its function is as follows. Endonuclease that specifically degrades the RNA of RNA-DNA hybrids. This chain is Ribonuclease H, found in Sulfurovum sp. (strain NBC37-1).